We begin with the raw amino-acid sequence, 565 residues long: Urocanate hydratase (565 aa).

NAD(+)-binding positions include glycine 61–glycine 62, glutamine 139, glycine 185–glycine 187, glutamate 205, arginine 210, asparagine 251–alanine 252, glutamine 272–histidine 276, tyrosine 282–leucine 283, and tyrosine 331. Residue cysteine 419 is part of the active site. The interval leucine 453–serine 472 is disordered. Positions arginine 463 to serine 472 are enriched in basic and acidic residues. Glycine 501 provides a ligand contact to NAD(+).

Belongs to the urocanase family. Requires NAD(+) as cofactor.

The protein localises to the cytoplasm. The enzyme catalyses 4-imidazolone-5-propanoate = trans-urocanate + H2O. Its pathway is amino-acid degradation; L-histidine degradation into L-glutamate; N-formimidoyl-L-glutamate from L-histidine: step 2/3. Catalyzes the conversion of urocanate to 4-imidazolone-5-propionate. This Pseudomonas syringae protein is Urocanate hydratase.